A 387-amino-acid polypeptide reads, in one-letter code: Alkanesulfonate monooxygenase (387 aa).

It belongs to the SsuD family.

It catalyses the reaction an alkanesulfonate + FMNH2 + O2 = an aldehyde + FMN + sulfite + H2O + 2 H(+). Its function is as follows. Catalyzes the desulfonation of aliphatic sulfonates. The polypeptide is Alkanesulfonate monooxygenase (Cupriavidus pinatubonensis (strain JMP 134 / LMG 1197) (Cupriavidus necator (strain JMP 134))).